The sequence spans 577 residues: Proline--tRNA ligase (577 aa).

Belongs to the class-II aminoacyl-tRNA synthetase family. ProS type 1 subfamily. In terms of assembly, homodimer.

Its subcellular location is the cytoplasm. It catalyses the reaction tRNA(Pro) + L-proline + ATP = L-prolyl-tRNA(Pro) + AMP + diphosphate. Functionally, catalyzes the attachment of proline to tRNA(Pro) in a two-step reaction: proline is first activated by ATP to form Pro-AMP and then transferred to the acceptor end of tRNA(Pro). As ProRS can inadvertently accommodate and process non-cognate amino acids such as alanine and cysteine, to avoid such errors it has two additional distinct editing activities against alanine. One activity is designated as 'pretransfer' editing and involves the tRNA(Pro)-independent hydrolysis of activated Ala-AMP. The other activity is designated 'posttransfer' editing and involves deacylation of mischarged Ala-tRNA(Pro). The misacylated Cys-tRNA(Pro) is not edited by ProRS. The sequence is that of Proline--tRNA ligase from Herminiimonas arsenicoxydans.